We begin with the raw amino-acid sequence, 421 residues long: NADH-dependent phenylglyoxylate dehydrogenase subunit epsilon (421 aa).

Residues 15 to 18, 39 to 40, and 279 to 297 each bind FAD; these read SSHA, TR, and ATAQARGFFTGTKVMNAIL.

This sequence belongs to the FAD-dependent oxidoreductase family. Dimer of heteropentamers composed of an alpha (PadG), a beta (PadI), a gamma (PadE), a delta (PadF) and an epsilon (PadH) subunit. The cofactor is FAD.

It carries out the reaction phenylglyoxylate + NAD(+) + CoA = benzoyl-CoA + CO2 + NADH. Its activity is regulated as follows. Activated by magnesium ions and thiamine diphosphate. Functionally, involved in the anaerobic metabolism of phenylalanine and phenylacetate. Catalyzes the oxidative decarboxylation of phenylglyoxylate to benzoyl-CoA and CO(2). It can also react slowly with 2-oxo-3-methylbutanoate and use different electron acceptors such as benzyl viologen, methyl viologen, FAD or FMN, but NAD seems to be the physiological electron acceptor. Also catalyzes an isotope exchange between CO(2) and the carboxyl group which proves partial or complete reversibility of the oxidative decarboxylation reaction. The sequence is that of NADH-dependent phenylglyoxylate dehydrogenase subunit epsilon (padH) from Aromatoleum evansii (Azoarcus evansii).